We begin with the raw amino-acid sequence, 488 residues long: Protein nucleotidyltransferase YdiU (488 aa).

Residues glycine 91, glycine 93, arginine 94, lysine 114, aspartate 126, glycine 127, arginine 177, and arginine 184 each coordinate ATP. Aspartate 253 acts as the Proton acceptor in catalysis. Mg(2+) contacts are provided by asparagine 254 and aspartate 263. Position 263 (aspartate 263) interacts with ATP.

It belongs to the SELO family. Mg(2+) serves as cofactor. Requires Mn(2+) as cofactor.

It catalyses the reaction L-seryl-[protein] + ATP = 3-O-(5'-adenylyl)-L-seryl-[protein] + diphosphate. The enzyme catalyses L-threonyl-[protein] + ATP = 3-O-(5'-adenylyl)-L-threonyl-[protein] + diphosphate. The catalysed reaction is L-tyrosyl-[protein] + ATP = O-(5'-adenylyl)-L-tyrosyl-[protein] + diphosphate. It carries out the reaction L-histidyl-[protein] + UTP = N(tele)-(5'-uridylyl)-L-histidyl-[protein] + diphosphate. It catalyses the reaction L-seryl-[protein] + UTP = O-(5'-uridylyl)-L-seryl-[protein] + diphosphate. The enzyme catalyses L-tyrosyl-[protein] + UTP = O-(5'-uridylyl)-L-tyrosyl-[protein] + diphosphate. Nucleotidyltransferase involved in the post-translational modification of proteins. It can catalyze the addition of adenosine monophosphate (AMP) or uridine monophosphate (UMP) to a protein, resulting in modifications known as AMPylation and UMPylation. The polypeptide is Protein nucleotidyltransferase YdiU (Bacillus thuringiensis (strain Al Hakam)).